The following is a 164-amino-acid chain: Large ribosomal subunit protein uL10 (164 aa).

Belongs to the universal ribosomal protein uL10 family. As to quaternary structure, part of the ribosomal stalk of the 50S ribosomal subunit. The N-terminus interacts with L11 and the large rRNA to form the base of the stalk. The C-terminus forms an elongated spine to which L12 dimers bind in a sequential fashion forming a multimeric L10(L12)X complex.

In terms of biological role, forms part of the ribosomal stalk, playing a central role in the interaction of the ribosome with GTP-bound translation factors. In Helicobacter pylori (strain ATCC 700392 / 26695) (Campylobacter pylori), this protein is Large ribosomal subunit protein uL10 (rplJ).